The primary structure comprises 278 residues: Undecaprenyl-diphosphatase (278 aa).

6 helical membrane-spanning segments follow: residues 49-69 (ANTF…VVFW), 97-117 (HVLI…DFID), 120-140 (LFSI…MIAA), 197-217 (ADFT…LSLV), 226-246 (GDLG…LLSI), and 258-278 (LVPF…IVYM).

It belongs to the UppP family.

It localises to the cell membrane. The catalysed reaction is di-trans,octa-cis-undecaprenyl diphosphate + H2O = di-trans,octa-cis-undecaprenyl phosphate + phosphate + H(+). Catalyzes the dephosphorylation of undecaprenyl diphosphate (UPP). Confers resistance to bacitracin. The polypeptide is Undecaprenyl-diphosphatase (Exiguobacterium sibiricum (strain DSM 17290 / CCUG 55495 / CIP 109462 / JCM 13490 / 255-15)).